The following is a 412-amino-acid chain: Alpha-ketoglutarate-dependent sulfonate dioxygenase (412 aa).

Serine 52 carries the phosphoserine modification. Fe cation-binding residues include histidine 218 and aspartate 220. 2-oxoglutarate-binding residues include threonine 245 and tryptophan 352. Residue histidine 367 coordinates Fe cation. 2 residues coordinate 2-oxoglutarate: arginine 379 and arginine 383.

Belongs to the TfdA dioxygenase family. The cofactor is Fe(2+).

The protein operates within organosulfur degradation; alkanesulfonate degradation. Its function is as follows. Acts as an alpha-ketoglutarate-dependent dioxygenase active on sulfonates. Although taurine is a poor substrate, a variety of other sulfonates are utilized, with the best natural substrates being isethionate and taurocholate. The protein is Alpha-ketoglutarate-dependent sulfonate dioxygenase (JLP1) of Saccharomyces cerevisiae (strain ATCC 204508 / S288c) (Baker's yeast).